Here is a 177-residue protein sequence, read N- to C-terminus: Acetyltransferase (177 aa).

Residues 4–174 (AQLRRVTAES…PTAIYFKTLG (171 aa)) enclose the N-acetyltransferase domain. Acetyl-CoA is bound by residues E27, 96 to 98 (LMV), 104 to 109 (GRGLGR), 130 to 131 (DT), and Y141.

Renders tabtoxin-producing pathogens tolerant to their own phytotoxins. In Pseudomonas amygdali pv. tabaci (Pseudomonas syringae pv. tabaci), this protein is Acetyltransferase (ttr).